The chain runs to 429 residues: Divergent protein kinase domain 2A (429 aa).

A signal peptide spans 1–34 (MLRLASLKFGRLFRYAKVLFAASLLVVMLLNTHS).

The protein belongs to the DIPK family.

Its subcellular location is the cytoplasmic vesicle. The protein resides in the COPI-coated vesicle. It is found in the golgi apparatus. The protein localises to the secreted. May play a role in cardiomyocyte proliferation through paracrine signaling and activation of the PPI3K-AKT-CDK7 signaling cascade. The polypeptide is Divergent protein kinase domain 2A (dipk2a) (Xenopus tropicalis (Western clawed frog)).